The primary structure comprises 80 residues: Large ribosomal subunit protein uL30 (80 aa).

The protein belongs to the universal ribosomal protein uL30 family. As to quaternary structure, part of the 50S ribosomal subunit.

In Vesicomyosocius okutanii subsp. Calyptogena okutanii (strain HA), this protein is Large ribosomal subunit protein uL30.